The primary structure comprises 112 residues: Cytochrome c 2.1 (112 aa).

4 residues coordinate heme c: cysteine 20, cysteine 23, histidine 24, and methionine 85.

The protein belongs to the cytochrome c family. Post-translationally, binds 1 heme c group covalently per subunit.

The protein localises to the mitochondrion intermembrane space. Electron carrier protein. The oxidized form of the cytochrome c heme group can accept an electron from the heme group of the cytochrome c1 subunit of cytochrome reductase. Cytochrome c then transfers this electron to the cytochrome oxidase complex, the final protein carrier in the mitochondrial electron-transport chain. This is Cytochrome c 2.1 from Caenorhabditis briggsae.